Consider the following 658-residue polypeptide: Glycogen debranching enzyme (658 aa).

The Nucleophile role is filled by aspartate 336. Glutamate 371 functions as the Proton donor in the catalytic mechanism. Residues 459–484 form a disordered region; that stretch reads EANGEENRDGTNSNYSDNHGKEGLGG.

Belongs to the glycosyl hydrolase 13 family.

It catalyses the reaction Hydrolysis of (1-&gt;6)-alpha-D-glucosidic linkages to branches with degrees of polymerization of three or four glucose residues in limit dextrin.. The protein operates within glycan degradation; glycogen degradation. Removes maltotriose and maltotetraose chains that are attached by 1,6-alpha-linkage to the limit dextrin main chain, generating a debranched limit dextrin. This is Glycogen debranching enzyme from Salmonella paratyphi A (strain ATCC 9150 / SARB42).